The sequence spans 300 residues: Ribonuclease HIII (300 aa).

The region spanning 86–300 (RPRLGVDESG…FYEICDSTDI (215 aa)) is the RNase H type-2 domain. A divalent metal cation-binding residues include Asp92, Glu93, and Asp196.

The protein belongs to the RNase HII family. RnhC subfamily. The cofactor is Mn(2+). Mg(2+) serves as cofactor.

Its subcellular location is the cytoplasm. The catalysed reaction is Endonucleolytic cleavage to 5'-phosphomonoester.. In terms of biological role, endonuclease that specifically degrades the RNA of RNA-DNA hybrids. The protein is Ribonuclease HIII of Chlamydia abortus (strain DSM 27085 / S26/3) (Chlamydophila abortus).